Reading from the N-terminus, the 138-residue chain is Large ribosomal subunit protein uL16 (138 aa).

The protein belongs to the universal ribosomal protein uL16 family. Part of the 50S ribosomal subunit.

Functionally, binds 23S rRNA and is also seen to make contacts with the A and possibly P site tRNAs. In Syntrophobacter fumaroxidans (strain DSM 10017 / MPOB), this protein is Large ribosomal subunit protein uL16.